The following is an 801-amino-acid chain: PR domain zinc finger protein 4 (801 aa).

One can recognise an SET domain in the interval Lys-412 to Ser-529. Residues His-545 to His-566 form a C2H2-type 1; atypical zinc finger. C2H2-type zinc fingers lie at residues His-618–His-640, Tyr-646–His-668, Leu-674–His-696, and Ile-702–His-724. A C2H2-type 6; atypical zinc finger spans residues Tyr-730–Cys-752. A disordered region spans residues Thr-751–Glu-782. The span at Pro-762 to Ala-776 shows a compositional bias: acidic residues.

This sequence belongs to the class V-like SAM-binding methyltransferase superfamily. As to expression, expressed in many tissues. Highly expressed in ovary, testis, pancreas, brain, heart and prostate.

Its subcellular location is the nucleus. Functionally, may function as a transcription factor involved in cell differentiation. The chain is PR domain zinc finger protein 4 (PRDM4) from Homo sapiens (Human).